Here is a 537-residue protein sequence, read N- to C-terminus: MFS-type transporter qa-x (537 aa).

The Cytoplasmic segment spans residues 1–26; the sequence is MTLLALKEDRPTPKAVYNWRVYTCAA. The helical transmembrane segment at 27 to 47 threads the bilayer; it reads IASFASCMIGYDSAFIGTTLA. Over 48–74 the chain is Extracellular; the sequence is LPSFTKEFDFASYTPGALALLQSNIVS. A helical membrane pass occupies residues 75–95; that stretch reads VYQAGAFFGCLFAYATSYFLG. Residues 96–98 are Cytoplasmic-facing; sequence RRK. Residues 99–119 traverse the membrane as a helical segment; it reads SLIAFSVVFIIGAAIMLAADG. Residues 120–131 lie on the Extracellular side of the membrane; the sequence is QGRGIDPIIAGR. The helical transmembrane segment at 132 to 152 threads the bilayer; the sequence is VLAGIGVGGASNMVPIYISEL. Residues 153–160 are Cytoplasmic-facing; that stretch reads APPAVRGR. A helical membrane pass occupies residues 161-181; sequence LVGIYELGWQIGGLVGFWINY. The Extracellular portion of the chain corresponds to 182-195; sequence GVNTTMAPTRSQWL. An N-linked (GlcNAc...) asparagine glycan is attached at Asn184. The chain crosses the membrane as a helical span at residues 196–216; sequence IPFAVQLIPAGLLFLGSFWIP. Over 217-285 the chain is Cytoplasmic; that stretch reads ESPRWLYANG…SLKQRKVQWR (69 aa). Residues 286–306 traverse the membrane as a helical segment; sequence FFLGGMLFFWQNGSGINAINY. Residues 307 to 327 are Extracellular-facing; it reads YSPTVFRSIGITGTDTGFLTT. Residues 328-349 traverse the membrane as a helical segment; that stretch reads GIFGVVKMVLTIIWLLWLVDLV. Residues 350 to 352 lie on the Cytoplasmic side of the membrane; the sequence is GRR. A helical membrane pass occupies residues 353–373; it reads RILFIGAAGGSLCMWFIGAYI. The Extracellular segment spans residues 374–389; the sequence is KIADPGSNKAEDAKLT. The chain crosses the membrane as a helical span at residues 390 to 410; the sequence is SGGIAAIFFFYLWTAFYTPSW. Over 411 to 435 the chain is Cytoplasmic; the sequence is NGTPWVINSEMFDQNTRSLGQASAA. Residues 436–456 traverse the membrane as a helical segment; that stretch reads ANNWFWNFIISRFTPQMFIKM. Over 457–458 the chain is Extracellular; it reads EY. A helical membrane pass occupies residues 459–479; sequence GVYFFFASLMLLSIVFIYFFL. Over 480 to 537 the chain is Cytoplasmic; the sequence is PETKSIPLEAMDRLFEIKPVQNANKNLMAELNFDRNPEREESSSLDDKDRVTQTENAV. The span at 514-531 shows a compositional bias: basic and acidic residues; the sequence is RNPEREESSSLDDKDRVT. The segment at 514–537 is disordered; it reads RNPEREESSSLDDKDRVTQTENAV.

The protein belongs to the major facilitator superfamily. Sugar transporter (TC 2.A.1.1) family.

Its subcellular location is the membrane. MFS-type transporter; part of the qa gene cluster that mediates the catabolism of quinic acid (QA) and as such, allows the use of QA as a sole carbon source. Involved in the upatke of QA. The qa cluster encodes 3 inducible enymes (qa-2, qa-3 and qa-4) catalyzing the first three reactions in the catabolism of quinic acid to protocatechuic acid (also known as 3,4-Dihydroxybenzoic acid). The protein is MFS-type transporter qa-x of Neurospora crassa (strain ATCC 24698 / 74-OR23-1A / CBS 708.71 / DSM 1257 / FGSC 987).